The sequence spans 213 residues: Octanoyltransferase (213 aa).

The BPL/LPL catalytic domain occupies 27-209; it reads AATPDEVWLC…RLLAAMPEPA (183 aa). Substrate contacts are provided by residues 66–73, 140–142, and 153–155; these read RGGQVTYH, ALG, and GVA. The Acyl-thioester intermediate role is filled by C171.

The protein belongs to the LipB family.

It localises to the cytoplasm. The catalysed reaction is octanoyl-[ACP] + L-lysyl-[protein] = N(6)-octanoyl-L-lysyl-[protein] + holo-[ACP] + H(+). Its pathway is protein modification; protein lipoylation via endogenous pathway; protein N(6)-(lipoyl)lysine from octanoyl-[acyl-carrier-protein]: step 1/2. In terms of biological role, catalyzes the transfer of endogenously produced octanoic acid from octanoyl-acyl-carrier-protein onto the lipoyl domains of lipoate-dependent enzymes. Lipoyl-ACP can also act as a substrate although octanoyl-ACP is likely to be the physiological substrate. The sequence is that of Octanoyltransferase from Bordetella petrii (strain ATCC BAA-461 / DSM 12804 / CCUG 43448).